The primary structure comprises 308 residues: Pantothenate kinase (308 aa).

93–100 (GSVAVGKS) contacts ATP.

Belongs to the prokaryotic pantothenate kinase family.

The protein resides in the cytoplasm. It carries out the reaction (R)-pantothenate + ATP = (R)-4'-phosphopantothenate + ADP + H(+). It participates in cofactor biosynthesis; coenzyme A biosynthesis; CoA from (R)-pantothenate: step 1/5. In Corynebacterium diphtheriae (strain ATCC 700971 / NCTC 13129 / Biotype gravis), this protein is Pantothenate kinase.